Here is a 165-residue protein sequence, read N- to C-terminus: Endoribonuclease YbeY (165 aa).

3 residues coordinate Zn(2+): His-131, His-135, and His-141.

It belongs to the endoribonuclease YbeY family. Zn(2+) serves as cofactor.

The protein resides in the cytoplasm. In terms of biological role, single strand-specific metallo-endoribonuclease involved in late-stage 70S ribosome quality control and in maturation of the 3' terminus of the 16S rRNA. This is Endoribonuclease YbeY from Agathobacter rectalis (strain ATCC 33656 / DSM 3377 / JCM 17463 / KCTC 5835 / VPI 0990) (Eubacterium rectale).